Consider the following 333-residue polypeptide: HTH-type transcriptional repressor PurR (333 aa).

The HTH lacI-type domain maps to 2-56 (ATIKDVAKLASVSTTTVSHVINKTRFVAEATQKRVWEAVEELNYAPSAVARSLKC). Residues 4-23 (IKDVAKLASVSTTTVSHVIN) constitute a DNA-binding region (H-T-H motif). Residues 48-56 (SAVARSLKC) mediate DNA binding. F73, K189, T191, F220, and D274 together coordinate hypoxanthine.

As to quaternary structure, homodimer.

It participates in purine metabolism; purine nucleotide biosynthesis [regulation]. Is the main repressor of the genes involved in the de novo synthesis of purine nucleotides, regulating purB, purC, purEK, purF, purHD, purL, purMN and guaBA expression. PurR is allosterically activated to bind its cognate DNA by binding the purine corepressors, hypoxanthine or guanine, thereby effecting transcription repression. This is HTH-type transcriptional repressor PurR from Aliivibrio salmonicida (strain LFI1238) (Vibrio salmonicida (strain LFI1238)).